The chain runs to 93 residues: Small ribosomal subunit protein uS19 (93 aa).

This sequence belongs to the universal ribosomal protein uS19 family.

Functionally, protein S19 forms a complex with S13 that binds strongly to the 16S ribosomal RNA. The chain is Small ribosomal subunit protein uS19 from Campylobacter jejuni subsp. jejuni serotype O:6 (strain 81116 / NCTC 11828).